Consider the following 154-residue polypeptide: 6,7-dimethyl-8-ribityllumazine synthase (154 aa).

5-amino-6-(D-ribitylamino)uracil contacts are provided by residues phenylalanine 21, 55-57 (AFE), and 79-81 (CVI). 84–85 (AT) contributes to the (2S)-2-hydroxy-3-oxobutyl phosphate binding site. The active-site Proton donor is histidine 87. Residue phenylalanine 112 participates in 5-amino-6-(D-ribitylamino)uracil binding. Residue arginine 126 participates in (2S)-2-hydroxy-3-oxobutyl phosphate binding.

The protein belongs to the DMRL synthase family. Forms an icosahedral capsid composed of 60 subunits, arranged as a dodecamer of pentamers.

The catalysed reaction is (2S)-2-hydroxy-3-oxobutyl phosphate + 5-amino-6-(D-ribitylamino)uracil = 6,7-dimethyl-8-(1-D-ribityl)lumazine + phosphate + 2 H2O + H(+). It functions in the pathway cofactor biosynthesis; riboflavin biosynthesis; riboflavin from 2-hydroxy-3-oxobutyl phosphate and 5-amino-6-(D-ribitylamino)uracil: step 1/2. Functionally, catalyzes the formation of 6,7-dimethyl-8-ribityllumazine by condensation of 5-amino-6-(D-ribitylamino)uracil with 3,4-dihydroxy-2-butanone 4-phosphate. This is the penultimate step in the biosynthesis of riboflavin. The sequence is that of 6,7-dimethyl-8-ribityllumazine synthase from Staphylococcus aureus (strain Mu50 / ATCC 700699).